Here is a 474-residue protein sequence, read N- to C-terminus: 6-phospho-beta-galactosidase (474 aa).

Positions 19, 116, 159, 160, and 297 each coordinate D-galactose 6-phosphate. The Proton donor role is filled by Glu160. The Nucleophile role is filled by Glu375. D-galactose 6-phosphate is bound by residues Ser433, Trp434, Lys440, and Tyr442.

The protein belongs to the glycosyl hydrolase 1 family.

It catalyses the reaction a 6-phospho-beta-D-galactoside + H2O = D-galactose 6-phosphate + an alcohol. Its pathway is carbohydrate metabolism; lactose degradation; D-galactose 6-phosphate and beta-D-glucose from lactose 6-phosphate: step 1/1. This Lacticaseibacillus casei (Lactobacillus casei) protein is 6-phospho-beta-galactosidase.